The following is a 504-amino-acid chain: Glycerol kinase (504 aa).

Thr-14 contributes to the ADP binding site. Residues Thr-14, Thr-15, and Ser-16 each contribute to the ATP site. Residue Thr-14 coordinates sn-glycerol 3-phosphate. Arg-18 lines the ADP pocket. Arg-84, Glu-85, and Tyr-136 together coordinate sn-glycerol 3-phosphate. Glycerol is bound by residues Arg-84, Glu-85, and Tyr-136. A Phosphohistidine; by HPr modification is found at His-232. Residue Asp-246 participates in sn-glycerol 3-phosphate binding. Glycerol-binding residues include Asp-246 and Gln-247. The ADP site is built by Thr-268 and Gly-311. ATP contacts are provided by Thr-268, Gly-311, Gln-315, and Gly-412. ADP contacts are provided by Gly-412 and Asn-416.

It belongs to the FGGY kinase family. In terms of assembly, homotetramer and homodimer (in equilibrium). Post-translationally, the phosphoenolpyruvate-dependent sugar phosphotransferase system (PTS), including enzyme I, and histidine-containing protein (HPr) are required for the phosphorylation, which leads to the activation of the enzyme.

It carries out the reaction glycerol + ATP = sn-glycerol 3-phosphate + ADP + H(+). It functions in the pathway polyol metabolism; glycerol degradation via glycerol kinase pathway; sn-glycerol 3-phosphate from glycerol: step 1/1. With respect to regulation, activated by phosphorylation and inhibited by fructose 1,6-bisphosphate (FBP). Functionally, key enzyme in the regulation of glycerol uptake and metabolism. Catalyzes the phosphorylation of glycerol to yield sn-glycerol 3-phosphate. The protein is Glycerol kinase of Streptococcus pyogenes serotype M6 (strain ATCC BAA-946 / MGAS10394).